The chain runs to 183 residues: Translation initiation factor IF-3 (183 aa).

The protein belongs to the IF-3 family. As to quaternary structure, monomer.

It localises to the cytoplasm. Functionally, IF-3 binds to the 30S ribosomal subunit and shifts the equilibrium between 70S ribosomes and their 50S and 30S subunits in favor of the free subunits, thus enhancing the availability of 30S subunits on which protein synthesis initiation begins. This chain is Translation initiation factor IF-3, found in Pseudomonas syringae pv. tomato (strain ATCC BAA-871 / DC3000).